A 222-amino-acid polypeptide reads, in one-letter code: Eukaryotic translation initiation factor 4E-1 (222 aa).

Residues 1–22 are compositionally biased toward basic and acidic residues; that stretch reads MVDEVEKPASLEESKTNTREVE. Residues 1-37 form a disordered region; it reads MVDEVEKPASLEESKTNTREVEEGAEEVIESDDTMSS. The segment covering 23–33 has biased composition (acidic residues); sequence EGAEEVIESDD. EIF4G-binding stretches follow at residues 47-50 and 57-93; these read HPLE and FDNPSGKSKQAAWGSSIRPIYTFSTVEDFWSVYNNIH. MRNA-binding positions include 65 to 70, Lys-97, and 115 to 116; these read KQAAWG and WE. The cysteines at positions 120 and 158 are disulfide-linked. An EIF4G-binding region spans residues 141 to 150; sequence YTLLAMIGEQ. MRNA is bound by residues 165–170 and 210–214; these read RVRQEK and KKLDR.

The protein belongs to the eukaryotic initiation factor 4E family. In terms of assembly, EIF4F is a multi-subunit complex, the composition of which varies with external and internal environmental conditions. It is composed of at least EIF4A, EIF4E and EIF4G. EIF4E is also known to interact with other partners. In higher plants two isoforms of EIF4F have been identified, named isoform EIF4F and isoform EIF(iso)4F. Isoform EIF4F has subunits p220 and p26, whereas isoform EIF(iso)4F has subunits p82 and p28. In terms of processing, according to the redox status, the Cys-120-Cys-158 disulfide bridge may have a role in regulating protein function by affecting its ability to bind capped mRNA. As to expression, expressed ubiquitously in seedlings, roots, leaves, sepals, petals, anthers and dehisced pollen, with highest levels in pollen, maturing anthers and roots. Strongly expressed in susceptible plants but not in resistant ones.

It is found in the nucleus. Its subcellular location is the cytoplasm. Its function is as follows. Component of the protein complex eIF4F, which is involved in the recognition of the mRNA cap, ATP-dependent unwinding of 5'-terminal secondary structure and recruitment of mRNA to the ribosome. Recognizes and binds the 7-methylguanosine-containing mRNA cap during an early step in the initiation of protein synthesis and facilitates ribosome binding by inducing the unwinding of the mRNAs secondary structures. Key component of recessive resistance to potyviruses. In terms of biological role, (Microbial infection) Susceptibility host factor required for viral infection (e.g. potato virus Y (PVY) and pepper mottle virus (PepMoV)) by recruiting viral RNAs to the host ribosomal complex via an interaction with viral genome-linked protein (VPg). This chain is Eukaryotic translation initiation factor 4E-1, found in Nicotiana tabacum (Common tobacco).